Here is a 512-residue protein sequence, read N- to C-terminus: Matrix metalloproteinase-27 (512 aa).

Positions methionine 1–alanine 17 are cleaved as a signal peptide. Residues leucine 18–glutamine 98 constitute a propeptide, activation peptide. The Cysteine switch signature appears at proline 89–valine 96. Cysteine 91 contributes to the Zn(2+) binding site. An N-linked (GlcNAc...) asparagine glycan is attached at asparagine 110. Aspartate 121 and aspartate 155 together coordinate Ca(2+). Histidine 165 provides a ligand contact to Zn(2+). Ca(2+) contacts are provided by aspartate 173, glycine 174, and valine 178. Residue histidine 181 coordinates Zn(2+). Positions 188 and 192 each coordinate Ca(2+). Histidine 194 is a Zn(2+) binding site. Residues aspartate 196 and glutamate 199 each contribute to the Ca(2+) site. Histidine 216 contacts Zn(2+). The active site involves glutamate 217. Zn(2+)-binding residues include histidine 220 and histidine 226. Hemopexin repeat units lie at residues proline 276–leucine 325, proline 326–arginine 371, valine 373–isoleucine 421, and glycine 422–cysteine 465. An intrachain disulfide couples cysteine 279 to cysteine 465. Aspartate 286 is a Ca(2+) binding site. Aspartate 377 and aspartate 426 together coordinate Ca(2+). The required for retention in the endoplasmic reticulum stretch occupies residues lysine 466–tyrosine 512.

Belongs to the peptidase M10A family. It depends on Ca(2+) as a cofactor. Requires Zn(2+) as cofactor. In terms of processing, N-glycosylated.

The protein localises to the endoplasmic reticulum. In terms of biological role, matrix metalloproteinases degrade protein components of the extracellular matrix such as fibronectin, laminin, gelatins and/or collagens. The chain is Matrix metalloproteinase-27 (MMP27) from Tupaia belangeri (Common tree shrew).